The following is a 188-amino-acid chain: D-glycero-beta-D-manno-heptose-1,7-bisphosphate 7-phosphatase (188 aa).

The Nucleophile role is filled by Asp11. Residues Asp11 and Asp13 each contribute to the Mg(2+) site. Substrate-binding positions include 11 to 13 (DRD), 19 to 22 (DHGY), and 53 to 56 (TNQS). The active-site Proton donor is the Asp13. The Zn(2+) site is built by Cys92, His94, Cys107, and Cys109. 110 to 111 (RK) is a substrate binding site. The Mg(2+) site is built by Asp136 and Lys137. Lys137 serves as a coordination point for substrate.

Belongs to the GmhB family. Monomer. The cofactor is Mg(2+). Zn(2+) serves as cofactor.

It is found in the cytoplasm. The catalysed reaction is D-glycero-beta-D-manno-heptose 1,7-bisphosphate + H2O = D-glycero-beta-D-manno-heptose 1-phosphate + phosphate. It functions in the pathway nucleotide-sugar biosynthesis; ADP-L-glycero-beta-D-manno-heptose biosynthesis; ADP-L-glycero-beta-D-manno-heptose from D-glycero-beta-D-manno-heptose 7-phosphate: step 2/4. It participates in bacterial outer membrane biogenesis; LPS core biosynthesis. Functionally, converts the D-glycero-beta-D-manno-heptose 1,7-bisphosphate intermediate into D-glycero-beta-D-manno-heptose 1-phosphate by removing the phosphate group at the C-7 position. The polypeptide is D-glycero-beta-D-manno-heptose-1,7-bisphosphate 7-phosphatase (gmhB) (Yersinia pestis).